A 484-amino-acid polypeptide reads, in one-letter code: Sulfoacetaldehyde dehydrogenase (484 aa).

Residues 105 to 110, Gly188, and Gly206 each bind NAD(+); that span reads LTPVTN. Catalysis depends on Cys239, which acts as the Nucleophile. Glu332 and Leu412 together coordinate NAD(+).

It belongs to the aldehyde dehydrogenase family.

The enzyme catalyses sulfoacetaldehyde + NAD(+) + CoA = sulfoacetyl-CoA + NADH + H(+). Functionally, part of a variant of the sulfo-TK pathway, a D-sulfoquinovose degradation pathway that produces sulfoacetate. Catalyzes the oxidation of sulfoacetaldehyde (SA) to sulfoacetyl-coenzyme A (sulfoacetyl-CoA). Is highly specific for NAD(+), with only residual (1%) activity with NADP(+). Cannot use acetaldehyde. The protein is Sulfoacetaldehyde dehydrogenase of Acholeplasma sp.